The following is a 372-amino-acid chain: 3-dehydroquinate synthase (372 aa).

NAD(+) contacts are provided by residues 113–117, 137–138, lysine 150, lysine 159, and 177–180; these read GVIGD, TS, and TLKT. Positions 192, 257, and 274 each coordinate Zn(2+).

Belongs to the sugar phosphate cyclases superfamily. Dehydroquinate synthase family. The cofactor is Co(2+). Requires Zn(2+) as cofactor. NAD(+) is required as a cofactor.

Its subcellular location is the cytoplasm. It catalyses the reaction 7-phospho-2-dehydro-3-deoxy-D-arabino-heptonate = 3-dehydroquinate + phosphate. Its pathway is metabolic intermediate biosynthesis; chorismate biosynthesis; chorismate from D-erythrose 4-phosphate and phosphoenolpyruvate: step 2/7. Catalyzes the conversion of 3-deoxy-D-arabino-heptulosonate 7-phosphate (DAHP) to dehydroquinate (DHQ). The polypeptide is 3-dehydroquinate synthase (Acaryochloris marina (strain MBIC 11017)).